The chain runs to 78 residues: DNA gyrase inhibitor YacG (78 aa).

Positions 7, 10, 26, and 30 each coordinate Zn(2+).

The protein belongs to the DNA gyrase inhibitor YacG family. Interacts with GyrB. Requires Zn(2+) as cofactor.

Inhibits all the catalytic activities of DNA gyrase by preventing its interaction with DNA. Acts by binding directly to the C-terminal domain of GyrB, which probably disrupts DNA binding by the gyrase. This is DNA gyrase inhibitor YacG from Colwellia psychrerythraea (strain 34H / ATCC BAA-681) (Vibrio psychroerythus).